Here is a 421-residue protein sequence, read N- to C-terminus: Subtilisin-like protease 2 (421 aa).

The first 16 residues, Met-1–Gly-16, serve as a signal peptide directing secretion. The propeptide occupies Asp-17–Ala-122. An Inhibitor I9 domain is found at Gln-36–Ala-122. The Peptidase S8 domain maps to Arg-131–Phe-421. Catalysis depends on charge relay system residues Asp-169 and His-201. Residues Asn-248, Asn-261, and Asn-348 are each glycosylated (N-linked (GlcNAc...) asparagine). The Charge relay system role is filled by Ser-357. An N-linked (GlcNAc...) asparagine glycan is attached at Asn-388.

It belongs to the peptidase S8 family.

The protein localises to the secreted. In terms of biological role, secreted subtilisin-like serine protease with keratinolytic activity that contributes to pathogenicity. The polypeptide is Subtilisin-like protease 2 (SUB2) (Trichophyton equinum (Horse ringworm fungus)).